The sequence spans 400 residues: MNSEENTDSIPIDLILDILSRLPSKSIARCRCVSKLWESMIRQSYFTELFLTRSSSRPHLLIAVEQEGEWKFFSLPQPKNYLGKSSLVVAANLHLKFFEDKRPQHGCSYASSLIYFPNMTIRKKGDDHLGVICNPSTGQYGYVILPPLLDFKSVPYGKFLGFDPIDKQFKVLIPIFDFDKHQTDHHILTLGAETVGWRKIQSPLRYLPHSNGTICINGILYYLAKINYAMDKNVLVCFDVRSENFVFLRLNTYCSSTKLVNYKGKLGMINQEYVDDGGFPLKLSVWVLEDVGKEEWSTYVYTLRDDNKVDQVKYNLSVVGVTASGEIVLVKKTQTLKPFYVLYFNPDKNTLLTVEVKGLHRGLYAVHRIYAFVDHVEDLEFNIMKTTYAAKSKFSQEDRF.

The F-box domain maps to 4 to 49 (EENTDSIPIDLILDILSRLPSKSIARCRCVSKLWESMIRQSYFTEL).

The polypeptide is Putative F-box protein At1g30920 (Arabidopsis thaliana (Mouse-ear cress)).